The primary structure comprises 652 residues: Putative glycine--tRNA ligase (652 aa).

The tract at residues 119–145 (GDKEARGQNSNDQPEESDDKKKRKKKV) is disordered. Glu221 provides a ligand contact to glycine. ATP contacts are provided by residues 253-255 (RNE) and 264-265 (RV). Glu272 contacts glycine. 380 to 381 (EC) lines the ATP pocket. Position 499-501 (499-501 (EPS)) interacts with glycine. Arg506 contacts ATP.

It belongs to the class-II aminoacyl-tRNA synthetase family. As to quaternary structure, homodimer.

The protein resides in the cytoplasm. It carries out the reaction tRNA(Gly) + glycine + ATP = glycyl-tRNA(Gly) + AMP + diphosphate. It catalyses the reaction 2 ATP + H(+) = P(1),P(4)-bis(5'-adenosyl) tetraphosphate + diphosphate. In terms of biological role, catalyzes the ATP-dependent ligation of glycine to the 3'-end of its cognate tRNA, via the formation of an aminoacyl-adenylate intermediate (Gly-AMP). Also produces diadenosine tetraphosphate (Ap4A), a universal pleiotropic signaling molecule needed for cell regulation pathways, by direct condensation of 2 ATPs. Thereby, may play a special role in Ap4A homeostasis. The chain is Putative glycine--tRNA ligase (grs1) from Schizosaccharomyces pombe (strain 972 / ATCC 24843) (Fission yeast).